The following is a 238-amino-acid chain: Orotidine 5'-phosphate decarboxylase (238 aa).

Residues Asp10, Lys32, 59–68 (DLKLHDIPNT), Thr122, Arg184, Gln193, Gly213, and Arg214 each bind substrate. The active-site Proton donor is the Lys61.

This sequence belongs to the OMP decarboxylase family. Type 1 subfamily. Homodimer.

The catalysed reaction is orotidine 5'-phosphate + H(+) = UMP + CO2. It functions in the pathway pyrimidine metabolism; UMP biosynthesis via de novo pathway; UMP from orotate: step 2/2. Its function is as follows. Catalyzes the decarboxylation of orotidine 5'-monophosphate (OMP) to uridine 5'-monophosphate (UMP). In Bacillus cereus (strain ATCC 10987 / NRS 248), this protein is Orotidine 5'-phosphate decarboxylase.